Consider the following 350-residue polypeptide: NADH-quinone oxidoreductase subunit H (350 aa).

Transmembrane regions (helical) follow at residues 5-25 (FIIE…IMAM), 76-96 (FLFV…SAVI), 118-138 (IALL…MIGG), 162-182 (IAMG…SLKV), 190-210 (MNWN…CSFA), 243-263 (LFAE…LFFG), 284-304 (LLGI…YMWV), and 319-339 (LGWR…GAVI).

This sequence belongs to the complex I subunit 1 family. As to quaternary structure, NDH-1 is composed of 14 different subunits. Subunits NuoA, H, J, K, L, M, N constitute the membrane sector of the complex.

Its subcellular location is the cell inner membrane. The enzyme catalyses a quinone + NADH + 5 H(+)(in) = a quinol + NAD(+) + 4 H(+)(out). In terms of biological role, NDH-1 shuttles electrons from NADH, via FMN and iron-sulfur (Fe-S) centers, to quinones in the respiratory chain. The immediate electron acceptor for the enzyme in this species is believed to be ubiquinone. Couples the redox reaction to proton translocation (for every two electrons transferred, four hydrogen ions are translocated across the cytoplasmic membrane), and thus conserves the redox energy in a proton gradient. This subunit may bind ubiquinone. In Flavobacterium johnsoniae (strain ATCC 17061 / DSM 2064 / JCM 8514 / BCRC 14874 / CCUG 350202 / NBRC 14942 / NCIMB 11054 / UW101) (Cytophaga johnsonae), this protein is NADH-quinone oxidoreductase subunit H.